An 81-amino-acid polypeptide reads, in one-letter code: Acyl carrier protein (81 aa).

Positions 5 to 80 constitute a Carrier domain; it reads EEIFSKVKSI…DIVSYIEKKL (76 aa). Serine 40 carries the O-(pantetheine 4'-phosphoryl)serine modification.

It belongs to the acyl carrier protein (ACP) family. In terms of processing, 4'-phosphopantetheine is transferred from CoA to a specific serine of apo-ACP by AcpS. This modification is essential for activity because fatty acids are bound in thioester linkage to the sulfhydryl of the prosthetic group.

The protein resides in the cytoplasm. Its pathway is lipid metabolism; fatty acid biosynthesis. Its function is as follows. Carrier of the growing fatty acid chain in fatty acid biosynthesis. The polypeptide is Acyl carrier protein (Thermotoga maritima (strain ATCC 43589 / DSM 3109 / JCM 10099 / NBRC 100826 / MSB8)).